A 655-amino-acid chain; its full sequence is Methylenetetrahydrofolate reductase (NADPH) (655 aa).

Residues 1–39 are disordered; sequence MVNEPRGNGSPGPRWEGSSSGSESSRTSSRCSTPGLDPE. Phosphoserine is present on residues Ser10, Ser18, Ser19, Ser20, Ser22, Ser24, Ser25, Ser28, and Ser29. Residues 11–35 show a composition bias toward low complexity; sequence PGPRWEGSSSGSESSRTSSRCSTPG. Phosphothreonine is present on Thr33. The Proton donor/acceptor role is filled by Glu62. NAD(+) is bound by residues 62–67 and 93–94; these read EFFPPR and TW. Thr93 carries the phosphothreonine modification. 93 to 94 provides a ligand contact to FAD; the sequence is TW. Phosphoserine is present on Ser102. FAD is bound by residues His126, 156 to 158, 173 to 174, Tyr196, 200 to 203, Asp209, and Lys216; these read RGD, YA, and HPEG. Asp158 contacts substrate. Positions 227, 320, and 324 each coordinate substrate. Residue Ser393 is modified to Phosphoserine. The residue at position 450 (Thr450) is a Phosphothreonine. S-adenosyl-L-methionine contacts are provided by residues Asn455, 460 to 463, 480 to 484, Thr559, and Thr572; these read AAET and TINSQ.

It belongs to the methylenetetrahydrofolate reductase family. In terms of assembly, homodimer. It depends on FAD as a cofactor. Phosphorylation of an N-terminal serine-rich phosphorylation region increases sensitivity to S-adenosylmethionine and inhibition.

The enzyme catalyses (6S)-5-methyl-5,6,7,8-tetrahydrofolate + NADP(+) = (6R)-5,10-methylene-5,6,7,8-tetrahydrofolate + NADPH + H(+). It participates in one-carbon metabolism; tetrahydrofolate interconversion. Allosterically regulated by S-adenosylmethionine (SAM). Functionally, catalyzes the conversion of 5,10-methylenetetrahydrofolate to 5-methyltetrahydrofolate, a cosubstrate for homocysteine remethylation to methionine. Represents a key regulatory connection between the folate and methionine cycles. The chain is Methylenetetrahydrofolate reductase (NADPH) (MTHFR) from Bos taurus (Bovine).